Reading from the N-terminus, the 683-residue chain is MLRNSIAPSRGLGSLARQRLTTSGRNLITKRSYIEGKSAAWPSGRSIASVLPARKTSCATFTTSATRGNEQNIRSPPSPSSASAISPEGISRPASSSPAGQTSPGSSVNPPEPPKAQTGAPPPPPPPPPAPKAKGRFGRSLLYLVLTAGVAYAGGVWFSLRSDNFHDFFTEYVPYGEEAVLYFEELDFRRRFPNATRHINTRPAAPRDEGEKVTIPSKSGVSWKVAENEGTSDVTHKGRHMSAVDAEVFRTGGDAKSASNKPTTEDKKGSEKTGSKKDESKERVPVTDTKKSTVSLDEPRKPAVATVSSIEPLAALQDDPIIQELTKIVNGLIAVINADESASKLAAPIAKAKDDFLKLGEQISSIKKEAHIAAQEEIKNAHKEFERSATELVRRIDEVRSEEAAEYREEFETEREKLANSYQEKIKTEVERANAVAEQRLRNELVEQAIQLNRKFLSDVDTLVEKERQGRFSKLSELSAQVAELEKLTAGWNEVIGANLTTQQLQVAVDAVHSALESESMPRPFINELLAVKSLAGQDPIVNAAISSINPTAYQRGIPSTAQIIDRFRRVANEVRKASLLPEDAGVASHATSYLMSKVMFKKEASSSGDDVESILTRTEKLLEQGNLDDAAREMNALRGWSKLLSKDWLADVRRVLEVRQALEVCFLFLLPTLSLLIYYNEY.

A mitochondrion-targeting transit peptide spans 1 to 11 (MLRNSIAPSRG). At 12–139 (LGSLARQRLT…APKAKGRFGR (128 aa)) the chain is on the mitochondrial matrix side. 2 stretches are compositionally biased toward polar residues: residues 61–74 (FTTS…QNIR) and 93–109 (PASS…SSVN). Residues 61 to 134 (FTTSATRGNE…PPPPPAPKAK (74 aa)) are disordered. Over residues 110 to 131 (PPEPPKAQTGAPPPPPPPPPAP) the composition is skewed to pro residues. The helical transmembrane segment at 140–160 (SLLYLVLTAGVAYAGGVWFSL) threads the bilayer. At 161–683 (RSDNFHDFFT…LSLLIYYNEY (523 aa)) the chain is on the mitochondrial intermembrane side. Residues 199-300 (INTRPAAPRD…KSTVSLDEPR (102 aa)) form a disordered region. Positions 263 to 300 (TTEDKKGSEKTGSKKDESKERVPVTDTKKSTVSLDEPR) are enriched in basic and acidic residues. A coiled-coil region spans residues 367–444 (KKEAHIAAQE…AVAEQRLRNE (78 aa)).

It belongs to the MICOS complex subunit Mic60 family. Component of the mitochondrial contact site and cristae organizing system (MICOS) complex.

Its subcellular location is the mitochondrion inner membrane. In terms of biological role, component of the MICOS complex, a large protein complex of the mitochondrial inner membrane that plays crucial roles in the maintenance of crista junctions, inner membrane architecture, and formation of contact sites to the outer membrane. Plays a role in keeping cristae membranes connected to the inner boundary membrane. Also promotes protein import via the mitochondrial intermembrane space assembly (MIA) pathway. This is MICOS complex subunit MIC60 (MIC60) from Trichophyton verrucosum (strain HKI 0517).